A 611-amino-acid polypeptide reads, in one-letter code: Mitochondrial distribution and morphology protein 34 (611 aa).

One can recognise an SMP-LTD domain in the interval 1–195; it reads MAFNFNWSPL…LPAIIHRLSL (195 aa). Positions 325–342 are enriched in polar residues; that stretch reads SAPLSSQDTASVASSQSR. 4 disordered regions span residues 325-347, 361-402, 415-544, and 587-611; these read SAPL…GLPS, RHSK…STIT, SIIP…PTYT, and SYVG…AYRH. A compositionally biased stretch (basic residues) spans 361-373; it reads RHSKAHARKRKKR. 2 stretches are compositionally biased toward basic and acidic residues: residues 374–385 and 444–459; these read VIDLRPHRKPTD and TLRD…ERTN. Residues 520-529 show a composition bias toward pro residues; that stretch reads PLGPPAPAPI.

The protein belongs to the MDM34 family. In terms of assembly, component of the ER-mitochondria encounter structure (ERMES) or MDM complex, composed of MMM1, MDM10, MDM12 and MDM34.

It localises to the mitochondrion outer membrane. Its function is as follows. Component of the ERMES/MDM complex, which serves as a molecular tether to connect the endoplasmic reticulum (ER) and mitochondria. Components of this complex are involved in the control of mitochondrial shape and protein biogenesis, and function in nonvesicular lipid trafficking between the ER and mitochondria. MDM34 is required for the interaction of the ER-resident membrane protein MMM1 and the outer mitochondrial membrane-resident beta-barrel protein MDM10. The sequence is that of Mitochondrial distribution and morphology protein 34 from Paracoccidioides brasiliensis (strain Pb18).